Reading from the N-terminus, the 221-residue chain is UPF0758 protein Ent638_0101 (221 aa).

The region spanning 99–221 (PLLSPEMTKD…YVSFAEQGWI (123 aa)) is the MPN domain. Zn(2+)-binding residues include histidine 170, histidine 172, and aspartate 183. Positions 170–183 (HNHPSGCAEPSKAD) match the JAMM motif motif.

This sequence belongs to the UPF0758 family. YicR subfamily.

The polypeptide is UPF0758 protein Ent638_0101 (Enterobacter sp. (strain 638)).